A 1068-amino-acid polypeptide reads, in one-letter code: Protein AF-10 (1068 aa).

Residues 22 to 74 (IGGCCVCSDERGWAENPLVYCDGHGCSVAVHQACYGIVQVPTGPWFCRKCESQ) form a PHD-type 1 zinc finger. The segment at 79–112 (RVRCELCPHKDGALKRTDNGGWAHVVCALYIPEV) adopts a C2HC pre-PHD-type zinc-finger fold. A self-association region spans residues 80–287 (VRCELCPHKD…SLKRLEDTTA (208 aa)). The tract at residues 106–190 (ALYIPEVQFA…EGNGADNVQY (85 aa)) is required for interaction with histone H3. A PHD-type 2 zinc finger spans residues 135–198 (KTCYICDEQG…QYCGYCKYHF (64 aa)). The tract at residues 141-233 (DEQGRESKAA…QDKHHEKEKK (93 aa)) is interaction with FSTL3. The disordered stretch occupies residues 206–260 (RGSNRSYDQSLSDSSSHSQDKHHEKEKKKYKEKDKHKQKHKKQPEPSPALVPSLT). The span at 211 to 222 (SYDQSLSDSSSH) shows a compositional bias: low complexity. Ser-217 is subject to Phosphoserine. A compositionally biased stretch (basic and acidic residues) spans 223-240 (SQDKHHEKEKKKYKEKDK). At Ser-252 the chain carries Phosphoserine. Lys-280 is covalently cross-linked (Glycyl lysine isopeptide (Lys-Gly) (interchain with G-Cter in SUMO2)). Residues 291–305 (NANFQEVSAHTSSGK) show a composition bias toward polar residues. The interval 291 to 505 (NANFQEVSAH…SSASPTSSVA (215 aa)) is disordered. Positions 306–317 (DVSETRGSEGKG) are enriched in basic and acidic residues. A DNA-binding region spans residues 311–674 (RGSEGKGKKS…QDLGDNSRNL (364 aa)). The span at 352–372 (SFSGTPGSVKSSSGSSVQSPQ) shows a compositional bias: low complexity. Composition is skewed to polar residues over residues 387 to 396 (YSHSQQSSAT) and 404 to 446 (SGSQ…SSLP). At Ser-436 the chain carries Phosphoserine. Residues 465–483 (EKKRKGNKQSKHGPGRPKG) show a composition bias toward basic residues. Residues 490–505 (VSHLSVSSASPTSSVA) are compositionally biased toward low complexity. Ser-532 is modified (phosphoserine). Residues 583–594 (SGSGSSTPVSSS) are compositionally biased toward low complexity. Disordered stretches follow at residues 583-612 (SGSG…ALSP) and 660-708 (NNQT…SLEN). Composition is skewed to polar residues over residues 595-604 (HLPQQSSGHL) and 660-673 (NNQT…NSRN). Positions 674-694 (LVGRGSSPRGSLSPRSPVSSL) are enriched in low complexity. Phosphoserine is present on residues Ser-684, Ser-686, and Ser-689. The segment at 703 to 784 (NSSLENLPPV…NAQLSVPFPT (82 aa)) is transactivation domain; required for DOT1L-binding. The segment at 750 to 778 (LQVENRRLEEQIKNLTAKKERLQLLNAQL) is leucine-zipper. Over residues 800–814 (AQTAPTTDSLNSSKS) the composition is skewed to polar residues. The disordered stretch occupies residues 800–865 (AQTAPTTDSL…SPAQQGSGVS (66 aa)). 2 stretches are compositionally biased toward low complexity: residues 834-848 (LTSS…SALS) and 855-865 (QSPAQQGSGVS).

Self-associates. Interacts with FSTL3 isoform 2; the interaction enhances MLLT10 in vitro transcriptional activity and self-association. Interacts with YEATS4. Interacts with SS18. Interacts with DOT1L; this interaction also occurs with the KMT2A/MLL1 fusion protein. Interacts with histone H3; interaction is necessary for MLLT10 binding to nucleosomes; interaction is inhibited by histone H3 'Lys-27' methylations (H3K27me1, H3K27me2 and H3K27me3) amd acetylation; interaction stabilizes association of MLLT10 at chromatin; interaction is essential for histone H3 'Lys-79' dimethylation (H3K79me2). Expressed abundantly in testis.

The protein localises to the nucleus. Functionally, probably involved in transcriptional regulation. In vitro or as fusion protein with KMT2A/MLL1 has transactivation activity. Binds to cruciform DNA. In cells, binding to unmodified histone H3 regulates DOT1L functions including histone H3 'Lys-79' dimethylation (H3K79me2) and gene activation. The chain is Protein AF-10 from Homo sapiens (Human).